The following is a 484-amino-acid chain: Probable cytochrome P450 316a1 (484 aa).

A heme-binding site is contributed by Cys-433.

It belongs to the cytochrome P450 family. The cofactor is heme.

It is found in the endoplasmic reticulum membrane. Its subcellular location is the microsome membrane. In terms of biological role, may be involved in the metabolism of insect hormones and in the breakdown of synthetic insecticides. This chain is Probable cytochrome P450 316a1 (Cyp316a1), found in Drosophila melanogaster (Fruit fly).